The following is a 234-amino-acid chain: Opacity protein opA55 (234 aa).

Residue alanine 1 is a signal peptide.

It belongs to the opacity porin family.

It localises to the cell outer membrane. Implicated in a number of adherence functions. OPA proteins are implicated in pathogenesis and are subject to phase variation. The polypeptide is Opacity protein opA55 (opaE) (Neisseria gonorrhoeae).